Reading from the N-terminus, the 68-residue chain is Beta-defensin 1 (68 aa).

An N-terminal signal peptide occupies residues 1–21; it reads MRTSYLLLFTLCLLMSEMASG. Positions 22 to 32 are excised as a propeptide; the sequence is DNFLTGLGHRS. 3 cysteine pairs are disulfide-bonded: C37–C66, C44–C59, and C49–C67.

It belongs to the beta-defensin family. Monomer. Homodimer.

The protein resides in the secreted. It is found in the membrane. In terms of biological role, has bactericidal activity. May act as a ligand for C-C chemokine receptor CCR6. Positively regulates the sperm motility and bactericidal activity in a CCR6-dependent manner. Binds to CCR6 and triggers Ca2+ mobilization in the sperm which is important for its motility. This Presbytis melalophos (Mitred leaf monkey) protein is Beta-defensin 1 (DEFB1).